Consider the following 417-residue polypeptide: Probable medium-chain specific acyl-CoA dehydrogenase 10, mitochondrial (417 aa).

The N-terminal 15 residues, 1–15 (MLSRIATSSLGLSRS), are a transit peptide targeting the mitochondrion. Residues 148-157 (YCVTEPGAGS) and 181-183 (WIT) contribute to the FAD site. Serine 157 provides a ligand contact to substrate. Residue 268 to 271 (DMTR) coordinates substrate. FAD-binding positions include 306–307 (HQ) and 364–368 (QIFGG). The active-site Proton acceptor is the glutamate 391. Residue glycine 392 participates in substrate binding. 393–395 (TSQ) contributes to the FAD binding site.

It belongs to the acyl-CoA dehydrogenase family. As to quaternary structure, homotetramer. The cofactor is FAD. Expressed in the epidermis and intestine.

It is found in the mitochondrion matrix. The catalysed reaction is a medium-chain 2,3-saturated fatty acyl-CoA + oxidized [electron-transfer flavoprotein] + H(+) = a medium-chain (2E)-enoyl-CoA + reduced [electron-transfer flavoprotein]. Its pathway is lipid metabolism; mitochondrial fatty acid beta-oxidation. This enzyme is specific for acyl chain lengths of 4 to 16. In Caenorhabditis elegans, this protein is Probable medium-chain specific acyl-CoA dehydrogenase 10, mitochondrial (acdh-10).